Consider the following 582-residue polypeptide: Choline kinase (582 aa).

The tract at residues 1–36 (MVQESRPGSVRSYSVGYQARSRSSSQRRHSLTRQRS) is disordered. Residue serine 30 is modified to Phosphoserine; by PKA. A phosphoserine mark is found at serine 48 and serine 51. Threonine 54 carries the post-translational modification Phosphothreonine. Serine 85 is subject to Phosphoserine; by PKA.

Belongs to the choline/ethanolamine kinase family. As to quaternary structure, monomer. Interacts with NAP1. Mg(2+) serves as cofactor.

It localises to the cytoplasm. The enzyme catalyses choline + ATP = phosphocholine + ADP + H(+). It carries out the reaction ethanolamine + ATP = phosphoethanolamine + ADP + H(+). It participates in phospholipid metabolism; phosphatidylcholine biosynthesis; phosphocholine from choline: step 1/1. Functionally, catalyzes the committed step in the synthesis of phosphatidylcholine by the CDP-choline pathway. Also exhibits ethanolamine kinase activity but it is a poor substrate at 14% efficiency compared with choline. This is Choline kinase from Saccharomyces cerevisiae (strain ATCC 204508 / S288c) (Baker's yeast).